Consider the following 295-residue polypeptide: Serpentine receptor class gamma-53 (295 aa).

6 helical membrane passes run 7-27 (IWLCYGIFSAILMIFMIVLLS), 39-61 (VITMDIILNLLCWVNTWPSRMVF), 121-141 (FYLLVYALIILYSFLAVQLLY), 173-193 (CFMSGYLLAIIIIALSTLYQV), 211-230 (MSLIAFSHTFVFTMLLAWQT), and 241-261 (IELLMIVSDMISFSMAYILLI).

This sequence belongs to the nematode receptor-like protein srg family.

The protein localises to the membrane. The protein is Serpentine receptor class gamma-53 (srg-53) of Caenorhabditis elegans.